The following is a 257-amino-acid chain: Synaptosomal-associated protein 29 (257 aa).

The tract at residues 1–42 (MSGYPKSYNPFDDDVEDEDTRPAPWKDARDLPDGPDPPIDRQ) is disordered. Residues 20-32 (TRPAPWKDARDLP) are compositionally biased toward basic and acidic residues. Phosphoserine is present on residues serine 77, serine 78, serine 114, serine 163, serine 181, serine 203, and serine 209. The t-SNARE coiled-coil homology domain maps to 195 to 257 (RAYHQKIDSN…KSTEKKVRQL (63 aa)).

This sequence belongs to the SNAP-25 family. In terms of assembly, forms a SNARE complex, composed of VAMP8, SNAP29 and STX17, involved in fusion of autophagosome with lysosome. Interacts with multiple syntaxins including STX6. Interacts with EIPR1. Interacts with STX17; this interaction is increased in the absence of TMEM39A. As to expression, widely expressed.

It localises to the cytoplasm. Its subcellular location is the golgi apparatus membrane. The protein resides in the cytoplasmic vesicle. It is found in the autophagosome membrane. The protein localises to the cell projection. It localises to the cilium membrane. SNAREs, soluble N-ethylmaleimide-sensitive factor-attachment protein receptors, are essential proteins for fusion of cellular membranes. SNAREs localized on opposing membranes assemble to form a trans-SNARE complex, an extended, parallel four alpha-helical bundle that drives membrane fusion. SNAP29 is a SNARE involved in autophagy through the direct control of autophagosome membrane fusion with the lysososome membrane. Also plays a role in ciliogenesis by regulating membrane fusions. The chain is Synaptosomal-associated protein 29 from Rattus norvegicus (Rat).